The primary structure comprises 218 residues: Adenylate kinase (218 aa).

An ATP-binding site is contributed by 10–15; the sequence is GAGKGT. The interval 30-59 is NMP; it reads STGDMLRAAVKAGTPLGLQAKAVMDAGQLV. Residues Thr31, Arg36, 57–59, 85–88, and Gln92 contribute to the AMP site; these read QLV and GFPR. The interval 122–159 is LID; the sequence is GRRSHPASGRTYHVKFNPPKVEGKDDVTGEPLVQREDD. Residues Arg123 and 132 to 133 each bind ATP; that span reads TY. Positions 127-150 are disordered; the sequence is PASGRTYHVKFNPPKVEGKDDVTG. 2 residues coordinate AMP: Arg156 and Arg167. Position 203 (Gly203) interacts with ATP.

The protein belongs to the adenylate kinase family. As to quaternary structure, monomer.

It is found in the cytoplasm. The catalysed reaction is AMP + ATP = 2 ADP. Its pathway is purine metabolism; AMP biosynthesis via salvage pathway; AMP from ADP: step 1/1. Its function is as follows. Catalyzes the reversible transfer of the terminal phosphate group between ATP and AMP. Plays an important role in cellular energy homeostasis and in adenine nucleotide metabolism. The chain is Adenylate kinase from Acidovorax ebreus (strain TPSY) (Diaphorobacter sp. (strain TPSY)).